Here is a 228-residue protein sequence, read N- to C-terminus: Thermonuclease (228 aa).

An N-terminal signal peptide occupies residues 1 to 23 (MTEYLLSAGICMAIVSILLIGMA). A propeptide spanning residues 24–60 (ISNVSKEQYAKRFFFFATSCLVLTLVVASSLSSSANA) is cleaved from the precursor. Position 100 (Asp-100) interacts with Ca(2+). Arg-114 is a catalytic residue. Ca(2+)-binding residues include Asp-119 and Thr-120. Active-site residues include Glu-122 and Arg-166.

Belongs to the thermonuclease family. Ca(2+) serves as cofactor.

The protein localises to the secreted. It carries out the reaction Endonucleolytic cleavage to nucleoside 3'-phosphates and 3'-phosphooligonucleotide end-products.. In terms of biological role, enzyme that catalyzes the hydrolysis of both DNA and RNA at the 5' position of the phosphodiester bond. The polypeptide is Thermonuclease (nuc) (Staphylococcus aureus (strain MRSA252)).